A 163-amino-acid chain; its full sequence is UPF0763 protein JJD26997_0796 (163 aa).

Belongs to the UPF0763 family.

The protein is UPF0763 protein JJD26997_0796 of Campylobacter jejuni subsp. doylei (strain ATCC BAA-1458 / RM4099 / 269.97).